A 455-amino-acid polypeptide reads, in one-letter code: Inactive peptidyl-prolyl cis-trans isomerase shutdown (455 aa).

Residues 34–54 are disordered; it reads SQQNHARDLGLDSDSDSDYED. Residues 44-54 are compositionally biased toward acidic residues; it reads LDSDSDSDYED. The PPIase FKBP-type domain occupies 103–192; that stretch reads KARVSVRYSG…LFKVEVIDYS (90 aa). 2 TPR repeats span residues 218-251 and 303-336; these read AVDL…LNYC and CKAL…QPAN.

This sequence belongs to the FKBP6 family. Interacts with Hsp83. Strongly expressed in the germline stem cells and in 16-cell cysts. Present in the germ cells throughout embryogenesis. Defects are due to derepression of transposable elements and impaired piRNA biogenesis.

The protein resides in the cytoplasm. The protein localises to the cytoplasmic ribonucleoprotein granule. In terms of biological role, co-chaperone required during oogenesis to repress transposable elements and prevent their mobilization, which is essential for the germline integrity. Acts via the piRNA metabolic process, which mediates the repression of transposable elements during meiosis by forming complexes composed of piRNAs and Piwi proteins and govern the methylation and subsequent repression of transposons. Acts as a co-chaperone via its interaction with Hsp83/HSP90 and is required for the biogenesis of all three piRNA major populations. In Drosophila melanogaster (Fruit fly), this protein is Inactive peptidyl-prolyl cis-trans isomerase shutdown.